The sequence spans 271 residues: NADH-quinone oxidoreductase subunit B (271 aa).

Residues C37, C38, C103, and C132 each contribute to the [4Fe-4S] cluster site. A disordered region spans residues 227-271 (LAPPSVFGRAKRIPVDPKPSDEARAHGPGPTTESIGDVDGPDRGI). The segment covering 239-251 (IPVDPKPSDEARA) has biased composition (basic and acidic residues).

This sequence belongs to the complex I 20 kDa subunit family. In terms of assembly, NDH-1 is composed of 14 different subunits. Subunits NuoB, C, D, E, F, and G constitute the peripheral sector of the complex. [4Fe-4S] cluster serves as cofactor.

Its subcellular location is the cell membrane. It carries out the reaction a quinone + NADH + 5 H(+)(in) = a quinol + NAD(+) + 4 H(+)(out). Functionally, NDH-1 shuttles electrons from NADH, via FMN and iron-sulfur (Fe-S) centers, to quinones in the respiratory chain. The immediate electron acceptor for the enzyme in this species is believed to be a menaquinone. Couples the redox reaction to proton translocation (for every two electrons transferred, four hydrogen ions are translocated across the cytoplasmic membrane), and thus conserves the redox energy in a proton gradient. This Frankia casuarinae (strain DSM 45818 / CECT 9043 / HFP020203 / CcI3) protein is NADH-quinone oxidoreductase subunit B.